Here is a 475-residue protein sequence, read N- to C-terminus: 7-dehydrocholesterol reductase (475 aa).

The tract at residues 1-21 is disordered; it reads MAAKSQPNIPKAKSLDGVTND. Residue S14 is modified to Phosphoserine. The next 6 membrane-spanning stretches (helical) occupy residues 40-60, 154-174, 177-197, 266-286, 306-326, and 331-351; these read LASV…FIMA, THLL…TIIF, WIPL…FAMV, VTNA…DFFW, LGWG…LYLV, and QLST…YYIF. NADP(+) contacts are provided by residues K358, R362, L395, W400, and 407–408; that span reads NY. A helical transmembrane segment spans residues 420-440; the sequence is LACGGGHLLPYFYIIYMAILL. Residues D447, 451-455, and Y462 each bind NADP(+); that span reads CASKY.

The protein belongs to the ERG4/ERG24 family. In terms of assembly, interacts with DHCR24; this interaction regulates DHCR7 activity. Interacts with TMEM147. As to expression, widely expressed. Most abundant in adrenal gland, liver, testis, and brain.

It is found in the endoplasmic reticulum membrane. It catalyses the reaction cholesterol + NADP(+) = 7-dehydrocholesterol + NADPH + H(+). The catalysed reaction is 7-dehydrodesmosterol + NADPH + H(+) = desmosterol + NADP(+). The enzyme catalyses 5,6alpha-epoxy-5alpha-cholestan-3beta-ol + H2O = 5alpha-cholestane-3beta,5,6beta-triol. It carries out the reaction 5,6beta-epoxy-5beta-cholestan-3beta-ol + H2O = 5alpha-cholestane-3beta,5,6beta-triol. Its pathway is steroid biosynthesis; cholesterol biosynthesis. 7-DHC reductase and cholesterol-5,6-epoxide hydrolase (ChEH) activities are inhibited by tamoxifen and the selective AEBS ligand (4-benzyl-phenoxy)-ethyl-N-pyrrolidine (PBPE). ChEH activity is inhibited by oleic acid. Functionally, oxidoreductase that catalyzes the last step of the cholesterol synthesis pathway, which transforms cholesta-5,7-dien-3beta-ol (7-dehydrocholesterol,7-DHC) into cholesterol by reducing the C7-C8 double bond of its sterol core. Can also metabolize cholesta-5,7,24-trien-3beta-ol (7-dehydrodemosterol, 7-DHD) to desmosterol, which is then metabolized by the Delta(24)-sterol reductase (DHCR24) to cholesterol. Modulates ferroptosis (a form of regulated cell death driven by iron-dependent lipid peroxidation) through the metabolic breakdown of the anti-ferroptotic metabolites 7-DHC and 7-DHD which, when accumulated, divert the propagation of peroxyl radical-mediated damage from phospholipid components to its sterol core, protecting plasma and mitochondrial membranes from phospholipid autoxidation. Its function is as follows. Component of the microsomal antiestrogen binding site (AEBS), a multiproteic complex at the ER membrane that consists of an association between cholestenol Delta-isomerase/EBP and DHCR7. This complex is responsible for cholesterol-5,6-epoxide hydrolase (ChEH) activity, which consists in the hydration of cholesterol-5,6-epoxides (5,6-EC) into cholestane-3beta,5alpha,6beta-triol (CT). The precise role of each component of this complex has not been described yet. This Homo sapiens (Human) protein is 7-dehydrocholesterol reductase.